The chain runs to 477 residues: Glutamate--tRNA ligase (477 aa).

A 'HIGH' region motif is present at residues 12-22 (PSPTGMFHVGG). Residues Cys-106, Cys-108, Cys-128, and Asp-130 each contribute to the Zn(2+) site. Residues 238 to 242 (KLSKR) carry the 'KMSKS' region motif. Lys-241 is a binding site for ATP.

This sequence belongs to the class-I aminoacyl-tRNA synthetase family. Glutamate--tRNA ligase type 1 subfamily. Monomer. The cofactor is Zn(2+).

Its subcellular location is the cytoplasm. It catalyses the reaction tRNA(Glu) + L-glutamate + ATP = L-glutamyl-tRNA(Glu) + AMP + diphosphate. In terms of biological role, catalyzes the attachment of glutamate to tRNA(Glu) in a two-step reaction: glutamate is first activated by ATP to form Glu-AMP and then transferred to the acceptor end of tRNA(Glu). This Thermobifida fusca (strain YX) protein is Glutamate--tRNA ligase.